The following is a 236-amino-acid chain: 3-deoxy-D-manno-octulosonic acid kinase (236 aa).

The active site involves aspartate 167.

This sequence belongs to the protein kinase superfamily. KdkA/RfaP family.

The protein resides in the cell inner membrane. It carries out the reaction an alpha-Kdo-(2-&gt;6)-lipid IVA + ATP = a 4-O-phospho-alpha-Kdo-(2-&gt;6)-lipid IVA + ADP + H(+). It functions in the pathway bacterial outer membrane biogenesis; LPS core biosynthesis. In terms of biological role, catalyzes the ATP-dependent phosphorylation of the 3-deoxy-D-manno-octulosonic acid (Kdo) residue in Kdo-lipid IV(A) at the 4-OH position. This Vibrio vulnificus (strain YJ016) protein is 3-deoxy-D-manno-octulosonic acid kinase.